We begin with the raw amino-acid sequence, 398 residues long: MSLFSAVEMAPRDPILGLNEAFNADTRPGKINLGVGVYYNEEGRIPLLRAVQAAEKARIEAHAPRGYLPIEGIAAYDQGVQKLLFGNESELLAAGRVVTTQAVGGTGALKLGADFLKRLLPDATVAISDPSWENHRALFEAAGFPVQNYRYYDAASNGVNRAGLLEDLNALPARSIVVLHACCHNPTGVDLELDDWKQVLDVLKAKGHVPFLDIAYQGFGNGIEEDAAAVRLFAQSGLSFFVSSSFSKSFSLYGERVGALSIVTESRDESARVLSQVKRVIRTNYSNPPTHGASVVSSVLNSPELRALWEQELGEMRDRIRDMRLAMVEQLAAHGAKRDFSFVGRQRGMFSYSGLTADQVERLKTEFGIYAVSTGRICVAALNKSNLETITKAIVQVL.

Positions 36, 132, and 185 each coordinate L-aspartate. The residue at position 248 (K248) is an N6-(pyridoxal phosphate)lysine. R376 is a binding site for L-aspartate.

This sequence belongs to the class-I pyridoxal-phosphate-dependent aminotransferase family. Homodimer. Requires pyridoxal 5'-phosphate as cofactor.

Its subcellular location is the cytoplasm. It catalyses the reaction L-aspartate + 2-oxoglutarate = oxaloacetate + L-glutamate. This chain is Aspartate aminotransferase (aspC), found in Pseudomonas aeruginosa (strain ATCC 15692 / DSM 22644 / CIP 104116 / JCM 14847 / LMG 12228 / 1C / PRS 101 / PAO1).